A 71-amino-acid chain; its full sequence is Gas vesicle protein A (71 aa).

The tract at residues 12–22 (LAEVIDRILDK) is alpha helix 1. Residues 26 to 34 (IDAWARVSL) are beta-strand 1. The segment at 35 to 37 (VGI) is beta turn. The segment at 38–46 (ELLAIEARV) is beta-strand 2. The tract at residues 51-70 (VETYLKYAEAVGLTQXAXXA) is alpha helix 2.

The protein belongs to the gas vesicle GvpA family. As to quaternary structure, the gas vesicle shell is 2 nm thick and consists of a single layer of this protein. It forms helical ribs nearly perpendicular to the long axis of the vesicle.

It localises to the gas vesicle shell. Functionally, gas vesicles are hollow, gas filled proteinaceous nanostructures found in some microorganisms. During planktonic growth they allow positioning of the organism at a favorable depth for light or nutrient acquisition. GvpA forms the protein shell. This chain is Gas vesicle protein A, found in Microcystis sp. (strain BC 84/1).